The primary structure comprises 438 residues: Xylose isomerase (438 aa).

Catalysis depends on residues histidine 100 and aspartate 103. 7 residues coordinate Mg(2+): glutamate 231, glutamate 267, histidine 270, aspartate 295, aspartate 306, aspartate 308, and aspartate 338.

The protein belongs to the xylose isomerase family. In terms of assembly, homotetramer. The cofactor is Mg(2+).

It is found in the cytoplasm. The enzyme catalyses alpha-D-xylose = alpha-D-xylulofuranose. The polypeptide is Xylose isomerase (Pseudomonas syringae pv. syringae (strain B728a)).